A 333-amino-acid chain; its full sequence is MSKIKPAKGAPYARILGVGGYRPTRVVPNEVILETIDSSDEWIRSRSGIQTRHWANDEETVAAMSIEASGKAIADAGITAAQVGAVIVSTVTHFKQTPAVATEIADKLGTNKAAAFDISAGCAGFGYGLTLAKGMIVEGSAEYVLVIGVERLSDLTDLEDRATAFLFGDGAGAVVVGPSNEPAIGPTIWGSEGDKAETIKQTVPWTDYREGGVERFPAITQEGQAVFRWAVFEMAKVAQQALDAAGVAAADLDVFIPHQANERIIDSMVKTLKLPESVTVARDVRTTGNTSAASIPLAMERLLATGEAKSGDTALVIGFGAGLVYAASVVTLP.

Active-site residues include Cys-122 and His-258. The ACP-binding stretch occupies residues 259–263 (QANER). Asn-289 is a catalytic residue.

It belongs to the thiolase-like superfamily. FabH family. As to quaternary structure, homodimer.

It localises to the cytoplasm. The catalysed reaction is butanoyl-CoA + malonyl-[ACP] + H(+) = 3-oxohexanoyl-[ACP] + CO2 + CoA. The enzyme catalyses malonyl-[ACP] + acetyl-CoA + H(+) = 3-oxobutanoyl-[ACP] + CO2 + CoA. It catalyses the reaction 2-methylpropanoyl-CoA + malonyl-[ACP] + H(+) = 4-methyl-3-oxopentanoyl-[ACP] + CO2 + CoA. The protein operates within lipid metabolism; fatty acid biosynthesis. Inhibited by thiolactomycin. Functionally, catalyzes the condensation reaction of fatty acid synthesis by the addition to an acyl acceptor of two carbons from malonyl-ACP. Catalyzes the first condensation reaction which initiates fatty acid synthesis and may therefore play a role in governing the total rate of fatty acid production. Possesses both acetoacetyl-ACP synthase and acetyl transacylase activities. Utilizes both straight and branched-chain acyl-CoAs. The order of reactivity with the various acyl-CoA substrates at saturation is butanoyl-CoA &gt; acetyl-CoA &gt; 2-methylpropanoyl-CoA (or isobutyryl-CoA). Not involved in tetracenomycin C (TCM C) biosynthesis. The chain is Beta-ketoacyl-[acyl-carrier-protein] synthase III (fabH) from Streptomyces glaucescens.